Consider the following 504-residue polypeptide: Putative lipase ATG15 (504 aa).

Met1 is a topological domain (cytoplasmic). A helical; Signal-anchor for type II membrane protein transmembrane segment spans residues 2-22 (LGRQVTMLLKVIVAVAVLFVW). Over 23–504 (HRSRDSSRGD…WLGICTDYGV (482 aa)) the chain is Lumenal. A glycan (N-linked (GlcNAc...) asparagine) is linked at Asn183. Ser313 functions as the Charge relay system in the catalytic mechanism. Positions 458–484 (EESSSSIASSSQLTSSHSESETLTSTD) are disordered. Low complexity predominate over residues 461–483 (SSSIASSSQLTSSHSESETLTST).

This sequence belongs to the AB hydrolase superfamily. Lipase family. As to quaternary structure, binds to both phosphatidylinositol (PI) and phosphatidylinositol 3,5-bisphosphate (PIP2).

It is found in the endosome. It localises to the multivesicular body membrane. The protein resides in the prevacuolar compartment membrane. The catalysed reaction is a triacylglycerol + H2O = a diacylglycerol + a fatty acid + H(+). Its function is as follows. Lipase which is essential for lysis of subvacuolar cytoplasm to vacuole targeted bodies and intravacuolar autophagic bodies. Involved in the lysis of intravacuolar multivesicular body (MVB) vesicles. The intravacuolar membrane disintegration by ATG15 is critical to life span extension. The polypeptide is Putative lipase ATG15 (ATG15) (Candida glabrata (strain ATCC 2001 / BCRC 20586 / JCM 3761 / NBRC 0622 / NRRL Y-65 / CBS 138) (Yeast)).